A 338-amino-acid chain; its full sequence is Glycerol-3-phosphate dehydrogenase [NAD(P)+] (338 aa).

NADPH-binding residues include Ser11, Trp12, His32, His33, and Lys109. Lys109, Gly140, and Ser142 together coordinate sn-glycerol 3-phosphate. Ala144 is a binding site for NADPH. Residues Lys195, Asp248, Ser258, Arg259, and Asn260 each contribute to the sn-glycerol 3-phosphate site. Lys195 functions as the Proton acceptor in the catalytic mechanism. Arg259 is a binding site for NADPH. Residues Val283 and Glu285 each contribute to the NADPH site.

The protein belongs to the NAD-dependent glycerol-3-phosphate dehydrogenase family.

The protein resides in the cytoplasm. The catalysed reaction is sn-glycerol 3-phosphate + NAD(+) = dihydroxyacetone phosphate + NADH + H(+). It catalyses the reaction sn-glycerol 3-phosphate + NADP(+) = dihydroxyacetone phosphate + NADPH + H(+). It participates in membrane lipid metabolism; glycerophospholipid metabolism. Catalyzes the reduction of the glycolytic intermediate dihydroxyacetone phosphate (DHAP) to sn-glycerol 3-phosphate (G3P), the key precursor for phospholipid synthesis. This is Glycerol-3-phosphate dehydrogenase [NAD(P)+] from Leuconostoc citreum (strain KM20).